A 72-amino-acid chain; its full sequence is uncharacterized protein (72 aa).

Low complexity predominate over residues Met-1–Gly-38. The segment at Met-1–His-42 is disordered.

This is an uncharacterized protein from Dictyostelium discoideum (Social amoeba).